An 88-amino-acid chain; its full sequence is RNA-binding protein Hfq (88 aa).

The Sm domain occupies 9–68 (DPFLNALRRERIPVSIYLVNGIKLQGQIESFDQFVILLKNTVNQMVYKHAISTVVPARAV). Positions 66–88 (RAVSHHSASDRPQGERPQEKTEE) are disordered. The segment covering 72–88 (SASDRPQGERPQEKTEE) has biased composition (basic and acidic residues).

This sequence belongs to the Hfq family. In terms of assembly, homohexamer.

Its function is as follows. RNA chaperone that binds small regulatory RNA (sRNAs) and mRNAs to facilitate mRNA translational regulation in response to envelope stress, environmental stress and changes in metabolite concentrations. Also binds with high specificity to tRNAs. The chain is RNA-binding protein Hfq from Aliivibrio fischeri (strain ATCC 700601 / ES114) (Vibrio fischeri).